The following is a 117-amino-acid chain: Immunoglobulin heavy variable 7-4-1 (117 aa).

The signal sequence occupies residues Met-1–Ser-19. Residues Gln-20–Ser-44 are framework-1. The region spanning Gln-20–Arg-117 is the Ig-like domain. Cysteines 41 and 115 form a disulfide. Residues Gly-45–Ala-52 form a complementarity-determining-1 region. The segment at Met-53 to Trp-69 is framework-2. The tract at residues Ile-70 to Pro-77 is complementarity-determining-2. The segment at Thr-78–Cys-115 is framework-3. Residues Ala-116–Arg-117 form a complementarity-determining-3 region.

As to quaternary structure, immunoglobulins are composed of two identical heavy chains and two identical light chains; disulfide-linked.

It localises to the secreted. It is found in the cell membrane. Its function is as follows. V region of the variable domain of immunoglobulin heavy chains that participates in the antigen recognition. Immunoglobulins, also known as antibodies, are membrane-bound or secreted glycoproteins produced by B lymphocytes. In the recognition phase of humoral immunity, the membrane-bound immunoglobulins serve as receptors which, upon binding of a specific antigen, trigger the clonal expansion and differentiation of B lymphocytes into immunoglobulins-secreting plasma cells. Secreted immunoglobulins mediate the effector phase of humoral immunity, which results in the elimination of bound antigens. The antigen binding site is formed by the variable domain of one heavy chain, together with that of its associated light chain. Thus, each immunoglobulin has two antigen binding sites with remarkable affinity for a particular antigen. The variable domains are assembled by a process called V-(D)-J rearrangement and can then be subjected to somatic hypermutations which, after exposure to antigen and selection, allow affinity maturation for a particular antigen. This is Immunoglobulin heavy variable 7-4-1 from Homo sapiens (Human).